The following is a 447-amino-acid chain: Gamma-glutamyl phosphate reductase (447 aa).

It belongs to the gamma-glutamyl phosphate reductase family.

Its subcellular location is the cytoplasm. The catalysed reaction is L-glutamate 5-semialdehyde + phosphate + NADP(+) = L-glutamyl 5-phosphate + NADPH + H(+). It participates in amino-acid biosynthesis; L-proline biosynthesis; L-glutamate 5-semialdehyde from L-glutamate: step 2/2. Its function is as follows. Catalyzes the NADPH-dependent reduction of L-glutamate 5-phosphate into L-glutamate 5-semialdehyde and phosphate. The product spontaneously undergoes cyclization to form 1-pyrroline-5-carboxylate. In Methanosarcina mazei (strain ATCC BAA-159 / DSM 3647 / Goe1 / Go1 / JCM 11833 / OCM 88) (Methanosarcina frisia), this protein is Gamma-glutamyl phosphate reductase.